Reading from the N-terminus, the 192-residue chain is MACGATLKRPMEFEAALLSPGSPKRRRCAPLPGPTPGLRPPDAEPPPPFQTQTPPQSLQQPAPPGSERRLPTPEQIFQNIKQEYSRYQRWRHLEVVLNQSEACASESQPHSSALTAPSSPGSSWMKKDQPTFTLRQVGIICERLLKDYEDKIREEYEQILNTKLAEQYESFVKFTHDQIMRRYGTRPTSYVS.

Residues 17 to 71 (LLSPGSPKRRRCAPLPGPTPGLRPPDAEPPPPFQTQTPPQSLQQPAPPGSERRLP) are disordered. Ser-22 carries the phosphoserine modification. The short motif at 23-28 (PKRRRC) is the Nuclear localization signal element. Residues 31–49 (LPGPTPGLRPPDAEPPPPF) are compositionally biased toward pro residues. The segment covering 50–60 (QTQTPPQSLQQ) has biased composition (low complexity). Thr-72 carries the phosphothreonine modification. Over residues 104 to 122 (ASESQPHSSALTAPSSPGS) the composition is skewed to polar residues. A disordered region spans residues 104-127 (ASESQPHSSALTAPSSPGSSWMKK). The short motif at 189-192 (SYVS) is the SYVS motif element.

Belongs to the akirin family. In terms of tissue distribution, widely expressed with the highest expression in heart, liver, placenta and peripheral blood leukocytes.

The protein resides in the nucleus. In terms of biological role, molecular adapter that acts as a bridge between proteins, and which is involved skeletal muscle development. Functions as a signal transducer for MSTN during skeletal muscle regeneration and myogenesis. May regulate chemotaxis of both macrophages and myoblasts by reorganising actin cytoskeleton, leading to more efficient lamellipodia formation via a PI3 kinase dependent pathway. In contrast to AKIRIN2, not involved in nuclear import of proteasomes. This chain is Akirin-1, found in Homo sapiens (Human).